The chain runs to 456 residues: Glycerol-3-phosphate acyltransferase 4 (456 aa).

The first 37 residues, 1 to 37 (MFLLLPFDSLIVSLLGISLTVLFTLLLVFIIVPAVFG), serve as a signal peptide directing secretion. The next 2 helical transmembrane spans lie at 156–176 (ISLR…CLLL) and 180–200 (IALA…VGYL). Asparagine 247 is a glycosylation site (N-linked (GlcNAc...) asparagine). The HXXXXD motif signature appears at 248–253 (HTSPID). Residues asparagine 327, asparagine 328, and asparagine 362 are each glycosylated (N-linked (GlcNAc...) asparagine).

It belongs to the 1-acyl-sn-glycerol-3-phosphate acyltransferase family.

Its subcellular location is the endoplasmic reticulum membrane. It carries out the reaction sn-glycerol 3-phosphate + an acyl-CoA = a 1-acyl-sn-glycero-3-phosphate + CoA. The catalysed reaction is dodecanoyl-CoA + sn-glycerol 3-phosphate = 1-dodecanoyl-sn-glycerol 3-phosphate + CoA. The enzyme catalyses sn-glycerol 3-phosphate + hexadecanoyl-CoA = 1-hexadecanoyl-sn-glycero-3-phosphate + CoA. It catalyses the reaction sn-glycerol 3-phosphate + octadecanoyl-CoA = 1-octadecanoyl-sn-glycero-3-phosphate + CoA. It carries out the reaction sn-glycerol 3-phosphate + (9Z)-octadecenoyl-CoA = 1-(9Z-octadecenoyl)-sn-glycero-3-phosphate + CoA. The catalysed reaction is (9Z,12Z)-octadecadienoyl-CoA + sn-glycerol 3-phosphate = 1-(9Z,12Z)-octadecadienoyl-sn-glycero-3-phosphate + CoA. It participates in phospholipid metabolism; CDP-diacylglycerol biosynthesis; CDP-diacylglycerol from sn-glycerol 3-phosphate: step 1/3. Its function is as follows. Converts glycerol-3-phosphate to 1-acyl-sn-glycerol-3-phosphate (lysophosphatidic acid or LPA) by incorporating an acyl moiety at the sn-1 position of the glycerol backbone. Active against both saturated and unsaturated long-chain fatty acyl-CoAs. Protects cells against lipotoxicity. This chain is Glycerol-3-phosphate acyltransferase 4, found in Bos taurus (Bovine).